The chain runs to 198 residues: Synaptobrevin homolog YKT6-A (198 aa).

A Longin domain is found at 8-127 (VLYKGENKVH…IQYNALDSYL (120 aa)). The v-SNARE coiled-coil homology domain maps to 138–198 (PMSKVQAELD…RKQNSCCDIM (61 aa)). The S-palmitoyl cysteine moiety is linked to residue Cys-194. Cys-195 is subject to Cysteine methyl ester. A lipid anchor (S-farnesyl cysteine) is attached at Cys-195. The propeptide at 196-198 (DIM) is removed in mature form.

This sequence belongs to the synaptobrevin family. In terms of processing, palmitoylated; catalyzes its own palmitoylation. Palmitoylation is required for Golgi targeting. Post-translationally, farnesylation is required for Golgi targeting.

It is found in the cytoplasm. It localises to the cytosol. The protein localises to the cytoplasmic vesicle membrane. The protein resides in the golgi apparatus membrane. In terms of biological role, vesicular soluble NSF attachment protein receptor (v-SNARE) mediating vesicle docking and fusion to a specific acceptor cellular compartment. Functions in endoplasmic reticulum to Golgi transport; as part of a SNARE complex composed of GOSR1, GOSR2 and STX5. Functions in early/recycling endosome to TGN transport; as part of a SNARE complex composed of BET1L, GOSR1 and STX5. Has a S-palmitoyl transferase activity. This chain is Synaptobrevin homolog YKT6-A (ykt6-a), found in Xenopus laevis (African clawed frog).